The sequence spans 500 residues: MSDILTKKQDIELRRAVIQYLRYFVPEFAQDTAVNTISRLLLDADLNKFDNEIQRMIPKQYLEKKWTAVLRLHRKVEELERTIGYQSNKVEIELQSQPHSDITSNSLDRINWVPGIEPFQKLNMHNGHPVTAIDIHPFQPIMATASQDGTIVIWNLLNLTEPQQIIRNAHTRSINTIKFMNQEVMDGHSTKKNRLLLATGSSDLLIKIWDIEDSANLKALRTLTGHENIISCLCFHPTEPSKLVSCSKDKTTKVWDTRTGSIVLSFVGHSNWVRSVDINRTGEFTLTSSNDHSIRLSSLLTGTGIGLMIGHEQVVEKVKFLPMACNKYLDHIAGVKFQNELKINDDNYNKVDYKYCISGGRDNSVCIWLLPLPLIRSDGTMHPSTNPEGKLILKLTEHKSWVKDIAIHPNSRFIISVGDDRKINIWDLGLLLESNLLQPFRSISTQGFPSTLCMAKPVIKDQESDDLILLNEAMRCYLAVGHSDGTVTLWKKNIQKEYIL.

7 WD repeats span residues histidine 125–glutamine 164, alanine 169–alanine 219, glycine 225–serine 265, glycine 268–glycine 310, glutamine 338–aspartate 378, glutamate 397–leucine 436, and isoleucine 459–leucine 500.

This sequence belongs to the WD repeat LIS1/nudF family. In terms of assembly, self-associates. Interacts with NDL1 and dynein.

It is found in the cytoplasm. The protein resides in the cytoskeleton. The protein localises to the spindle pole. Positively regulates the activity of the minus-end directed microtubule motor protein dynein. Plays a central role in positioning the mitotic spindle at the bud neck during cell division. Targets cytoplasmic dynein to microtubule plus ends, thereby promoting dynein-mediated microtubule sliding along the bud cortex and consequently the movement of the mitotic spindle to the bud neck. The chain is Nuclear distribution protein PAC1 from Komagataella phaffii (strain GS115 / ATCC 20864) (Yeast).